We begin with the raw amino-acid sequence, 151 residues long: Homeobox protein HD-1 (151 aa).

The segment at residues 87–146 is a DNA-binding region (homeobox); sequence ESIKSRRFPKFITEALERSFEIDQYPSEAEKARLAKICKLSTKQINNWFTNKRNRTKGHE.

Its subcellular location is the nucleus. This chain is Homeobox protein HD-1 (HD-1), found in Encephalitozoon cuniculi (strain GB-M1) (Microsporidian parasite).